Reading from the N-terminus, the 552-residue chain is MSQTRKKTSSEGETKPQTSTVNKFLRGSNAESRKEDNDLKTSDSQPSDWIQKTATSETAKPLSSEMEWRSSMEKNEHFLQKLGKKAVNKCLDLNNCGLTTADMKEMVALLPFLPDLEELDISWNGFVGGTLLSITQQMHLVSKLKILRLGSCRLTTDDVQALGEAFEMIPELEELNLSWNSKVGGNLPLILQKFQKGSKIQMIELVDCSLTSEDGTFLGQLLPMLQSLEVLDLSINRDIVGSLNSIAQGLKSTSNLKVLKLHSCGLSQKSVKILDAAFRYLGELRKLDLSCNKDLGGGFEDSPAQLVMLKHLQVLDLHQCSLTADDVMSLTQVIPLLSNLQELDLSANKKMGSSSENLLSRLRFLPALKSLVINNCALESETFTALAEASVHLSALEVFNLSWNKCVGGNLKLLLETLKLSMSLQVLRLSSCSLVTEDVALLASVIQTGHLAKLQKLDLSYNDSICDAGWTMFCQNVRFLKELIELDISLRPSNFRDCGQWFRHLLYAVTKLPQITEIGMKRWILPASQEEELECFDQDKKRSIHFDHGGFQ.

The tract at residues 1-65 is disordered; it reads MSQTRKKTSS…SETAKPLSSE (65 aa). Over residues 31–41 the composition is skewed to basic and acidic residues; it reads ESRKEDNDLKT. Residues 42 to 58 are compositionally biased toward polar residues; sequence SDSQPSDWIQKTATSET. 9 LRR repeats span residues 227–246, 255–275, 283–293, 311–331, 339–360, 367–387, 395–415, 423–443, and 453–475; these read SLEV…LNSI, NLKV…KILD, ELRKLDLSCNK, HLQV…MSLT, NLQE…NLLS, ALKS…TALA, ALEV…KLLL, SLQV…ALLA, and KLQK…MFCQ.

The polypeptide is Leucine-rich repeat-containing protein 31 (LRRC31) (Homo sapiens (Human)).